A 442-amino-acid chain; its full sequence is G-protein coupled receptor family C group 5 member C (442 aa).

Positions 1–23 (MAIHRTVLMCLGLPLFLLPGARA) are cleaved as a signal peptide. The Extracellular portion of the chain corresponds to 24–50 (QEQAPPGCSPDLNPLYYNLCDRSEAWG). The chain crosses the membrane as a helical span at residues 51 to 71 (IILEAVAGAGVVTTFVLTIIL). The Cytoplasmic portion of the chain corresponds to 72–85 (VASLPFVQDTKKRS). A helical transmembrane segment spans residues 86–106 (LLGTQVFFLLGTLGLFCLVFA). Residues 107-120 (CVVKPSFSTCASRR) are Extracellular-facing. Residues 121–141 (FLFGVLFAICFSCLVAHVLAL) form a helical membrane-spanning segment. The Cytoplasmic segment spans residues 142–155 (HFLVRKNHGPRGWV). A helical membrane pass occupies residues 156 to 176 (IFLVALLLSLVEVIINTEWLI). The Extracellular portion of the chain corresponds to 177 to 209 (ITLVRGAGTEGDALGNGSAGWVAVSPCAIANAD). An N-linked (GlcNAc...) asparagine glycan is attached at Asn-192. A helical transmembrane segment spans residues 210–230 (FVMALIYVMLLLLCAFSGAWS). The Cytoplasmic portion of the chain corresponds to 231-242 (ALCGRFKRWRKH). Residues 243-263 (GVFILLTTTASIAVWVVWIVM) form a helical membrane-spanning segment. At 264–280 (YTYGNRQHNSPTWDDPT) the chain is on the extracellular side. Residues 281–301 (LAIALATNAWAFVLFYVIPEV) traverse the membrane as a helical segment. Residues 302-442 (SQVTRSSPEQ…QVFRNPYVWD (141 aa)) are Cytoplasmic-facing. A phosphoserine mark is found at Ser-345, Ser-384, Ser-404, and Ser-407. Position 415 is a phosphotyrosine (Tyr-415). The residue at position 424 (Thr-424) is a Phosphothreonine.

Belongs to the G-protein coupled receptor 3 family.

It is found in the cell membrane. Functionally, this retinoic acid-inducible G-protein coupled receptor provide evidence for a possible interaction between retinoid and G-protein signaling pathways. This chain is G-protein coupled receptor family C group 5 member C (GPRC5C), found in Bos taurus (Bovine).